The sequence spans 660 residues: Bifunctional polymyxin resistance protein ArnA (660 aa).

Residues 1-304 (MKTVVFAYHD…MLGLVQGSRL (304 aa)) form a formyltransferase ArnAFT region. (6R)-10-formyltetrahydrofolate is bound at residue 86-88 (HLI). His104 functions as the Proton donor; for formyltransferase activity in the catalytic mechanism. Residues Arg114 and 136 to 140 (VKRAD) each bind (6R)-10-formyltetrahydrofolate. The interval 314-660 (RRTRVLILGV…RTVDLTDKPS (347 aa)) is dehydrogenase ArnADH. NAD(+) is bound by residues Asp347 and 368–369 (DI). Residues Ala393, Tyr398, and 432–433 (TS) contribute to the UDP-alpha-D-glucuronate site. Catalysis depends on Glu434, which acts as the Proton acceptor; for decarboxylase activity. Residues Arg460, Asn492, 526 to 535 (KLIDGGKQKR), and Tyr613 each bind UDP-alpha-D-glucuronate. The Proton donor; for decarboxylase activity role is filled by Arg619.

In the N-terminal section; belongs to the Fmt family. UDP-L-Ara4N formyltransferase subfamily. The protein in the C-terminal section; belongs to the NAD(P)-dependent epimerase/dehydratase family. UDP-glucuronic acid decarboxylase subfamily. In terms of assembly, homohexamer, formed by a dimer of trimers.

It carries out the reaction UDP-alpha-D-glucuronate + NAD(+) = UDP-beta-L-threo-pentopyranos-4-ulose + CO2 + NADH. The enzyme catalyses UDP-4-amino-4-deoxy-beta-L-arabinose + (6R)-10-formyltetrahydrofolate = UDP-4-deoxy-4-formamido-beta-L-arabinose + (6S)-5,6,7,8-tetrahydrofolate + H(+). The protein operates within nucleotide-sugar biosynthesis; UDP-4-deoxy-4-formamido-beta-L-arabinose biosynthesis; UDP-4-deoxy-4-formamido-beta-L-arabinose from UDP-alpha-D-glucuronate: step 1/3. It functions in the pathway nucleotide-sugar biosynthesis; UDP-4-deoxy-4-formamido-beta-L-arabinose biosynthesis; UDP-4-deoxy-4-formamido-beta-L-arabinose from UDP-alpha-D-glucuronate: step 3/3. Its pathway is bacterial outer membrane biogenesis; lipopolysaccharide biosynthesis. Its function is as follows. Bifunctional enzyme that catalyzes the oxidative decarboxylation of UDP-glucuronic acid (UDP-GlcUA) to UDP-4-keto-arabinose (UDP-Ara4O) and the addition of a formyl group to UDP-4-amino-4-deoxy-L-arabinose (UDP-L-Ara4N) to form UDP-L-4-formamido-arabinose (UDP-L-Ara4FN). The modified arabinose is attached to lipid A and is required for resistance to polymyxin and cationic antimicrobial peptides. The protein is Bifunctional polymyxin resistance protein ArnA of Shigella sonnei (strain Ss046).